The sequence spans 158 residues: uncharacterized protein (158 aa).

The tract at residues 77-132 is disordered; that stretch reads AIKRNKIGGSKRSEVHSNRSKNYSSKKFRSQKCRRSRQKKRQNKKPNNSRFISSNK. Basic residues predominate over residues 100–120; that stretch reads SSKKFRSQKCRRSRQKKRQNK.

This is an uncharacterized protein from Acanthamoeba polyphaga mimivirus (APMV).